The sequence spans 510 residues: Aspartate kinase FUB3 (510 aa).

2 ACT domains span residues 372–440 and 446–510; these read ILSN…VLPD and LVGA…KNAI.

It belongs to the aspartokinase family.

The enzyme catalyses L-aspartate + ATP = 4-phospho-L-aspartate + ADP. It functions in the pathway mycotoxin biosynthesis. Functionally, aspartate kinase; part of the gene cluster that mediates the biosynthesis of fusaric acid, a mycotoxin with low to moderate toxicity to animals and humans, but with high phytotoxic properties. L-aspartate is suggested as fusaric acid amino acid precursor that is activated and further processed to O-acetyl-L-homoserine by cluster enzymes aspartate kinase FUB3 and homoserine O-acetyltransferase FUB5, as well as enzymes of the primary metabolism. The polyketide synthase (PKS) FUB1 generates the triketide trans-2-hexenal which is presumptively released by the hydrolase FUB4 and linked to the NRPS-bound amino acid precursor by NAD(P)-dependent dehydrogenase FUB6. FUB1, FUB4, and the non-canonical NRPS Fub8 may form an enzyme complex. Further processing of the NRPS-bound intermediate might be carried out by FUB6 and the sulfhydrylase FUB7, enabling a spontaneous electrocyclization to close the carbon backbone of fusaric acid. Dihydrofusaric acid is likely to be released via reduction by the thioester reductase (TR) domain of FUB8 whereupon the final oxidation to fusaric acid may (also) be performed by the FMN-dependent dehydrogenase FUB9. This Gibberella fujikuroi (strain CBS 195.34 / IMI 58289 / NRRL A-6831) (Bakanae and foot rot disease fungus) protein is Aspartate kinase FUB3.